Consider the following 349-residue polypeptide: Zinc-type alcohol dehydrogenase-like protein PB24D3.08c (349 aa).

The protein belongs to the zinc-containing alcohol dehydrogenase family. Quinone oxidoreductase subfamily.

The protein resides in the cytoplasm. The protein localises to the nucleus. In Schizosaccharomyces pombe (strain 972 / ATCC 24843) (Fission yeast), this protein is Zinc-type alcohol dehydrogenase-like protein PB24D3.08c.